The chain runs to 107 residues: MSTYRSPDRAWQALADGTRRAIVERLAHGPLAVGELARDLPVSRPAVSQHLKVLKTARLVCDRPAGTRRVYQLDPTGLAALRTDLDRFWTRALTGYAQLIDSEGDDT.

In terms of domain architecture, HTH arsR-type spans 1–93; it reads MSTYRSPDRA…DLDRFWTRAL (93 aa). The segment at residues 33 to 56 is a DNA-binding region (H-T-H motif); that stretch reads VGELARDLPVSRPAVSQHLKVLKT.

Homodimer.

With respect to regulation, DNA-binding ability is not susceptible to zinc, nickel, cobalt, cadmium, lead, copper and manganese ions. Involved in the regulation of lipid metabolism and hypoxic response. Positively regulates transcription of various genes, such as phoP, groEL2 and dosR. Negatively regulates its own transcription. Acts by binding to a specific palindromic sequence motif in promoter regions. This is HTH-type transcriptional regulator Rv2034 from Mycobacterium tuberculosis (strain ATCC 25618 / H37Rv).